The sequence spans 131 residues: Small ribosomal subunit protein bS6 (131 aa).

Positions 96–131 (VTEASPMVKAKDERRERRDDFANETADDAEAGDSEE) are disordered. Residues 104–116 (KAKDERRERRDDF) are compositionally biased toward basic and acidic residues. The span at 120-131 (TADDAEAGDSEE) shows a compositional bias: acidic residues.

The protein belongs to the bacterial ribosomal protein bS6 family.

Binds together with bS18 to 16S ribosomal RNA. The sequence is that of Small ribosomal subunit protein bS6 from Salmonella arizonae (strain ATCC BAA-731 / CDC346-86 / RSK2980).